Reading from the N-terminus, the 346-residue chain is Cell shape-determining protein MreC (346 aa).

The stretch at 89–118 (NRRLKAELAEMRQWRDRALALQDQNDRFKS) forms a coiled coil. Positions 292 to 346 (SLPPVTTEDPQTSILSNPVSRPVAPTPSPATATPSAAPAARPATTATPPQTGAPR) are disordered. The segment covering 299–308 (EDPQTSILSN) has biased composition (polar residues). A compositionally biased stretch (low complexity) spans 309-340 (PVSRPVAPTPSPATATPSAAPAARPATTATPP).

This sequence belongs to the MreC family. In terms of assembly, interacts with penicillin-binding proteins (PBP2, PBP1a, PBP1b, PBP2a and PBP2b). Interacts with outer membrane proteins belonging to the TonB-dependent receptor family of transport proteins.

The protein localises to the periplasm. Functionally, involved in formation and maintenance of cell shape. Required for the spatial organization of components of the peptidoglycan-synthesizing holoenzyme in the periplasm and peptidoglycan synthetic activity. This is Cell shape-determining protein MreC from Caulobacter vibrioides (strain NA1000 / CB15N) (Caulobacter crescentus).